Reading from the N-terminus, the 393-residue chain is NADH-quinone oxidoreductase subunit D 2 (393 aa).

Belongs to the complex I 49 kDa subunit family. In terms of assembly, NDH-1 is composed of 14 different subunits. Subunits NuoB, C, D, E, F, and G constitute the peripheral sector of the complex.

It localises to the cell inner membrane. The enzyme catalyses a quinone + NADH + 5 H(+)(in) = a quinol + NAD(+) + 4 H(+)(out). In terms of biological role, NDH-1 shuttles electrons from NADH, via FMN and iron-sulfur (Fe-S) centers, to quinones in the respiratory chain. The immediate electron acceptor for the enzyme in this species is believed to be a menaquinone. Couples the redox reaction to proton translocation (for every two electrons transferred, four hydrogen ions are translocated across the cytoplasmic membrane), and thus conserves the redox energy in a proton gradient. In Cytophaga hutchinsonii (strain ATCC 33406 / DSM 1761 / CIP 103989 / NBRC 15051 / NCIMB 9469 / D465), this protein is NADH-quinone oxidoreductase subunit D 2.